Reading from the N-terminus, the 274-residue chain is Putative ABC transporter ATP-binding protein MM_1037 (274 aa).

Residues 2-235 (IRLENVSYCY…PSLKDLGLTP (234 aa)) form the ABC transporter domain. 35–42 (GRNGSGKS) contributes to the ATP binding site.

The protein belongs to the ABC transporter superfamily.

It is found in the cell membrane. Probably part of an ABC transporter complex. Responsible for energy coupling to the transport system. This is Putative ABC transporter ATP-binding protein MM_1037 from Methanosarcina mazei (strain ATCC BAA-159 / DSM 3647 / Goe1 / Go1 / JCM 11833 / OCM 88) (Methanosarcina frisia).